The following is a 303-amino-acid chain: MYYGFDIGGTKIALGVFDSTRRLQWEKRVPTPHASYSAFLDAVCELVAEADQRFGVKGSVGIGIPGMPETEDGTLYAANVPAASGKPLRADLSARLDRDVRLDNDANCFALSEAWDDEFTQYPLVMGLILGTGVGGGLVLNGKPITGQSYITGEFGHMRLPVDALTLMGFDFPLRRCGCGQMGCIENYLSGRGFAWLYQHYYDQSLQAPEIIALWEQGDEQAHAHVERYLDLLAVCLGNILTIVDPDLLVIGGGLSNFTAITTQLAERLPRHLLPVARAPRIERARHGDAGGMRGAAFLHLTD.

ATP is bound by residues 4–11 (GFDIGGTK) and 133–140 (GVGGGLVL). Positions 157, 177, 179, and 184 each coordinate Zn(2+).

Belongs to the ROK (NagC/XylR) family. NagK subfamily.

It carries out the reaction N-acetyl-D-glucosamine + ATP = N-acetyl-D-glucosamine 6-phosphate + ADP + H(+). The protein operates within cell wall biogenesis; peptidoglycan recycling. Catalyzes the phosphorylation of N-acetyl-D-glucosamine (GlcNAc) derived from cell-wall degradation, yielding GlcNAc-6-P. In Salmonella heidelberg (strain SL476), this protein is N-acetyl-D-glucosamine kinase.